A 414-amino-acid polypeptide reads, in one-letter code: MNTSRLFSLLFQGSLVKRIAAGLVLGIVVALISAPLQETIGFNLAEKVGVLGTIFVKALRAVAPILIFFLVMAALANRKIGTKSNMKEIIVLYLLGTFLAAFVAVIAGFVFPTEVVLAAKEDSSSAPQAVGQVLLTLILNVVDNPLNAIFKANFIGVLAWSIGLGLALRHASDATKNVLSDFAEGVSKIVHVIISFAPFGVFGLVAETLSDKGLVALGGYVQLLAVLIGTMLFTAFVVNPILVYWKIRRNPYPLVWTCVRESGVTAFFTRSSAANIPVNIELAKRLNLDEETYSVSIPLGANINMAGAAITITILTLAAVHTLGLEVSFVSALLLSIVAALCACGASGVAGGSLLLIPLACSLFGISDDVAAQMIGVGFIIGILQDSTETALNSSTDVLFTAAVCMEEERKNAA.

8 helical membrane-spanning segments follow: residues Gly-22–Phe-42, Ile-54–Ala-74, Ile-89–Phe-109, Ala-148–Leu-168, Ile-189–Leu-209, Leu-223–Val-243, Met-305–Leu-325, and Ile-337–Ile-357.

This sequence belongs to the dicarboxylate/amino acid:cation symporter (DAACS) (TC 2.A.23) family.

Its subcellular location is the cell inner membrane. It catalyses the reaction L-serine(in) + Na(+)(in) = L-serine(out) + Na(+)(out). The enzyme catalyses L-threonine(in) + Na(+)(in) = L-threonine(out) + Na(+)(out). Functionally, involved in the import of serine and threonine into the cell, with the concomitant import of sodium (symport system). The polypeptide is Serine/threonine transporter SstT (Haemophilus influenzae (strain PittGG)).